Reading from the N-terminus, the 160-residue chain is Transcription elongation factor GreA (160 aa).

The stretch at 14 to 38 (IKAELASLKKERPEVIKAIAEAREE) forms a coiled coil.

It belongs to the GreA/GreB family.

In terms of biological role, necessary for efficient RNA polymerase transcription elongation past template-encoded arresting sites. The arresting sites in DNA have the property of trapping a certain fraction of elongating RNA polymerases that pass through, resulting in locked ternary complexes. Cleavage of the nascent transcript by cleavage factors such as GreA or GreB allows the resumption of elongation from the new 3'terminus. GreA releases sequences of 2 to 3 nucleotides. This chain is Transcription elongation factor GreA, found in Maridesulfovibrio salexigens (strain ATCC 14822 / DSM 2638 / NCIMB 8403 / VKM B-1763) (Desulfovibrio salexigens).